The primary structure comprises 405 residues: Nicotinate phosphoribosyltransferase (405 aa).

At histidine 230 the chain carries Phosphohistidine; by autocatalysis.

This sequence belongs to the NAPRTase family. Post-translationally, transiently phosphorylated on a His residue during the reaction cycle. Phosphorylation strongly increases the affinity for substrates and increases the rate of nicotinate D-ribonucleotide production. Dephosphorylation regenerates the low-affinity form of the enzyme, leading to product release.

The enzyme catalyses nicotinate + 5-phospho-alpha-D-ribose 1-diphosphate + ATP + H2O = nicotinate beta-D-ribonucleotide + ADP + phosphate + diphosphate. The protein operates within cofactor biosynthesis; NAD(+) biosynthesis; nicotinate D-ribonucleotide from nicotinate: step 1/1. Its function is as follows. Catalyzes the synthesis of beta-nicotinate D-ribonucleotide from nicotinate and 5-phospho-D-ribose 1-phosphate at the expense of ATP. This chain is Nicotinate phosphoribosyltransferase, found in Bordetella bronchiseptica (strain ATCC BAA-588 / NCTC 13252 / RB50) (Alcaligenes bronchisepticus).